The chain runs to 96 residues: Small ribosomal subunit protein uS17 (96 aa).

This sequence belongs to the universal ribosomal protein uS17 family. In terms of assembly, part of the 30S ribosomal subunit.

Its function is as follows. One of the primary rRNA binding proteins, it binds specifically to the 5'-end of 16S ribosomal RNA. The protein is Small ribosomal subunit protein uS17 of Deinococcus radiodurans (strain ATCC 13939 / DSM 20539 / JCM 16871 / CCUG 27074 / LMG 4051 / NBRC 15346 / NCIMB 9279 / VKM B-1422 / R1).